The following is an 880-amino-acid chain: Alanine--tRNA ligase (880 aa).

Residues His-548, His-552, Cys-651, and His-655 each coordinate Zn(2+).

This sequence belongs to the class-II aminoacyl-tRNA synthetase family. The cofactor is Zn(2+).

Its subcellular location is the cytoplasm. It carries out the reaction tRNA(Ala) + L-alanine + ATP = L-alanyl-tRNA(Ala) + AMP + diphosphate. Functionally, catalyzes the attachment of alanine to tRNA(Ala) in a two-step reaction: alanine is first activated by ATP to form Ala-AMP and then transferred to the acceptor end of tRNA(Ala). Also edits incorrectly charged Ser-tRNA(Ala) and Gly-tRNA(Ala) via its editing domain. This is Alanine--tRNA ligase from Tropheryma whipplei (strain TW08/27) (Whipple's bacillus).